A 628-amino-acid polypeptide reads, in one-letter code: FAD-linked oxidoreductase easE (628 aa).

The N-terminal stretch at 1 to 20 (MSHRILCVAFCVCSLVAVSS) is a signal peptide. The FAD-binding PCMH-type domain maps to 144–328 (HQGRIPLYSA…TRATMRVHLN (185 aa)). The residue at position 182 (His182) is a Pros-8alpha-FAD histidine. N-linked (GlcNAc...) asparagine glycans are attached at residues Asn343, Asn382, and Asn487.

Belongs to the oxygen-dependent FAD-linked oxidoreductase family. Requires FAD as cofactor.

It participates in alkaloid biosynthesis; ergot alkaloid biosynthesis. In terms of biological role, FAD binding oxidoreductase; part of the gene cluster that mediates the biosynthesis of fumiclavanine C, a fungal ergot alkaloid. DmaW catalyzes the first step of ergot alkaloid biosynthesis by condensing dimethylallyl diphosphate (DMAP) and tryptophan to form 4-dimethylallyl-L-tryptophan. The second step is catalyzed by the methyltransferase easF that methylates 4-dimethylallyl-L-tryptophan in the presence of S-adenosyl-L-methionine, resulting in the formation of 4-dimethylallyl-L-abrine. The catalase easC and the FAD-dependent oxidoreductase easE then transform 4-dimethylallyl-L-abrine to chanoclavine-I which is further oxidized by EasD in the presence of NAD(+), resulting in the formation of chanoclavine-I aldehyde. EasA reduces chanoclavine-I aldehyde to dihydrochanoclavine-I aldehyde that spontaneously dehydrates to form 6,8-dimethyl-6,7-didehydroergoline. EasG then catalyzes the reduction of 6,8-dimethyl-6,7-didehydroergoline to form festuclavine. Hydrolysis of festuclavine by easM then leads to the formation of fumigaclavine B which is in turn acetylated by easN to fumigaclavine A. Finally, easL catalyzes the conversion of fumigaclavine A into fumigaclavine C by attaching a dimethylallyl moiety to C-2 of the indole nucleus. This is FAD-linked oxidoreductase easE from Aspergillus fumigatus (strain ATCC MYA-4609 / CBS 101355 / FGSC A1100 / Af293) (Neosartorya fumigata).